A 393-amino-acid chain; its full sequence is D-alanyl-D-alanine carboxypeptidase DacA (393 aa).

Positions 1 to 18 are cleaved as a signal peptide; the sequence is MLKRTTKIAFLSSFVALS. Ser-65 functions as the Acyl-ester intermediate in the catalytic mechanism. Lys-68 acts as the Proton acceptor in catalysis. The active site involves Ser-128. Lys-231 contacts substrate.

The protein belongs to the peptidase S11 family.

It localises to the cell inner membrane. It catalyses the reaction Preferential cleavage: (Ac)2-L-Lys-D-Ala-|-D-Ala. Also transpeptidation of peptidyl-alanyl moieties that are N-acyl substituents of D-alanine.. The protein operates within cell wall biogenesis; peptidoglycan biosynthesis. In terms of biological role, removes C-terminal D-alanyl residues from sugar-peptide cell wall precursors. This chain is D-alanyl-D-alanine carboxypeptidase DacA (dacA), found in Haemophilus influenzae (strain ATCC 51907 / DSM 11121 / KW20 / Rd).